Reading from the N-terminus, the 607-residue chain is Matrix metalloproteinase-16 (607 aa).

Positions 1 to 31 (MILLAFSSGRRLDFVHRSGVFFFQTLLWILC) are cleaved as a signal peptide. Residues 32-119 (ATVCGTEQYF…SSKFNIRRKR (88 aa)) constitute a propeptide that is removed on maturation. Asn-83 carries an N-linked (GlcNAc...) asparagine glycan. Residues 99–106 (PRCGVPDQ) carry the Cysteine switch motif. Cys-101 provides a ligand contact to Zn(2+). Residues 120–564 (YALTGQKWQH…LDNTASTVKA (445 aa)) lie on the Extracellular side of the membrane. Residue Asp-183 coordinates Ca(2+). His-193 and Asp-195 together coordinate Zn(2+). The Ca(2+) site is built by Asp-200, Gly-201, Gly-203, and Phe-205. Residue His-208 participates in Zn(2+) binding. 3 residues coordinate Ca(2+): Gly-215, Gly-217, and Asp-219. His-221 contributes to the Zn(2+) binding site. Ca(2+)-binding residues include Asp-223 and Glu-226. His-246 serves as a coordination point for Zn(2+). The active site involves Glu-247. His-250 and His-256 together coordinate Zn(2+). Residues 281-340 (DDLQGIQKIYGPPDKIPPPTRPLPTVPPHRSVPPADPRKNDRPKPPRPPTGRPSYPGAKP) are disordered. Positions 294–315 (DKIPPPTRPLPTVPPHRSVPPA) are enriched in pro residues. 4 Hemopexin repeats span residues 340 to 388 (PNIC…WRGL), 389 to 434 (PPSI…GNGI), 436 to 484 (PHGI…KGIP), and 485 to 532 (ESPQ…FMGC). Cys-343 and Cys-532 are disulfide-bonded. A helical membrane pass occupies residues 565 to 585 (IAIVIPCILALCLLVLVYTVF). Topologically, residues 586–607 (QFKRKGTPRHILYCKRSMQEWV) are cytoplasmic.

It belongs to the peptidase M10A family. In terms of assembly, interacts with CSPG4 through CSPG4 chondroitin sulfate glycosaminoglycan. Zn(2+) serves as cofactor. Requires Ca(2+) as cofactor. In terms of processing, the precursor is cleaved by a furin endopeptidase. Strongly expressed in the lung, brain and smooth muscle cells. Weakly detectable in the spleen and liver and indetectable in the heart, skeletal muscle and kidney.

The protein localises to the cell membrane. It is found in the secreted. The protein resides in the extracellular space. It localises to the extracellular matrix. Endopeptidase that degrades various components of the extracellular matrix, such as collagen type III and fibronectin. Activates progelatinase A. Involved in the matrix remodeling of blood vessels. The short isoform efficiently converts progelatinase A to the intermediate form but not to the mature one. It has no effect on type I, II, IV and V collagen. However, upon interaction with CSPG4, it may be involved in degradation and invasion of type I collagen by melanoma cells. The sequence is that of Matrix metalloproteinase-16 (Mmp16) from Rattus norvegicus (Rat).